The chain runs to 295 residues: 3-hydroxy-5-phosphonooxypentane-2,4-dione thiolase (295 aa).

Catalysis depends on Lys-203, which acts as the Schiff-base intermediate with substrate.

It belongs to the DeoC/FbaB aldolase family. As to quaternary structure, homodecamer.

It is found in the cytoplasm. It carries out the reaction dihydroxyacetone phosphate + acetyl-CoA = 3-hydroxy-2,4-dioxopentyl phosphate + CoA. Involved in the degradation of phospho-AI-2, thereby terminating induction of the lsr operon and closing the AI-2 signaling cycle. Catalyzes the transfer of an acetyl moiety from 3-hydroxy-5-phosphonooxypentane-2,4-dione to CoA to form glycerone phosphate and acetyl-CoA. The polypeptide is 3-hydroxy-5-phosphonooxypentane-2,4-dione thiolase (Enterobacter sp. (strain 638)).